The primary structure comprises 314 residues: MTSIESHPEQYWAAAGRPGPVPLALGPVHPGGPTLIDLLMALFGLSTNADLGGANADIEGDDTDRRAHAADAARKFSANEANAAEQMQGVGAQGMAQMASGIGGALSGALGGVMGPLTQLPQQAMQAGQGAMQPLMSAMQQAQGADGLAAVDGARLLDSIGGEPGLGSGAGGGDVGGGGAGGTTPTGYLGPPPVPTSSPPTTPAGAPTKSATMPPPGGASPASAHMGAAGMPMVPPGAMGARGEGSGQEKPVEKRVTAPAVPNGQPVKGRLTVPPSAPTTKPTDGKPVVRRRILLPEHKDFGRIAPDEKTDAGE.

A run of 2 helical transmembrane segments spans residues 23–43 (LALG…MALF) and 98–118 (MASG…GPLT). Gly residues predominate over residues 165-184 (GLGSGAGGGDVGGGGAGGTT). The interval 165-314 (GLGSGAGGGD…APDEKTDAGE (150 aa)) is disordered. Residues 190–202 (GPPPVPTSSPPTT) are compositionally biased toward pro residues. Composition is skewed to low complexity over residues 203–212 (PAGAPTKSAT) and 219–232 (ASPA…AGMP). A helical transmembrane segment spans residues 221–241 (PASAHMGAAGMPMVPPGAMGA). Residues 294–314 (LLPEHKDFGRIAPDEKTDAGE) are compositionally biased toward basic and acidic residues.

It localises to the cell membrane. This is an uncharacterized protein from Mycobacterium tuberculosis (strain CDC 1551 / Oshkosh).